Reading from the N-terminus, the 546-residue chain is Cytokine-like nuclear factor N-PAC (546 aa).

In terms of domain architecture, PWWP spans 8–66 (LGDLVWGKLGRYPPWPGKIVNPPKDLKKPRGKKCFFVKFFGTEDHAWIKVEQLKPYHAH). 2 stretches are compositionally biased toward basic and acidic residues: residues 91–145 (RRAK…EGKK) and 161–181 (RAQE…KDLT). The disordered stretch occupies residues 91 to 187 (RRAKGKDQTS…KDLTIPESST (97 aa)). Serine 130 is subject to Phosphoserine. Lysine 135 is covalently cross-linked (Glycyl lysine isopeptide (Lys-Gly) (interchain with G-Cter in SUMO2)). Serine 166 is subject to Phosphoserine. The a.T hook DNA-binding region spans 167-179 (PRKRGRPPKDEKD). Residues lysine 175, lysine 178, lysine 200, and lysine 210 each participate in a glycyl lysine isopeptide (Lys-Gly) (interchain with G-Cter in SUMO2) cross-link. The segment at 213-216 (DPHF) is interaction with histone H3. The tract at residues 215 to 224 (HFHHFLLSQT) is interaction with KDM1B. Residues lysine 226, lysine 236, lysine 239, and lysine 268 each participate in a glycyl lysine isopeptide (Lys-Gly) (interchain with G-Cter in SUMO2) cross-link. The tract at residues 260–546 (GSITPTDKKI…MSAVYRAYIH (287 aa)) is dehydrogenase domain. 270–284 (GFLGLGLMGSGIVSN) lines the NAD(+) pocket. Residue lysine 301 forms a Glycyl lysine isopeptide (Lys-Gly) (interchain with G-Cter in SUMO2) linkage. Residues threonine 355 and lysine 498 each contribute to the NAD(+) site. At serine 533 the chain carries Phosphoserine.

This sequence belongs to the HIBADH-related family. NP60 subfamily. Homotetramere. Interacts with MAPK14. Interacts with KDM1B at nucleosomes; this interaction stimulates H3K4me1 and H3K4me2 demethylation. Binds to mononucleosomes. Interacts with GATA4; the interaction is required for a synergistic activation of GATA4 target genes transcription.

It is found in the nucleus. It localises to the chromosome. Cytokine-like nuclear factor with chromatin gene reader activity involved in chromatin modification and regulation of gene expression. Acts as a nucleosome-destabilizing factor that is recruited to genes during transcriptional activation. Recognizes and binds histone H3 without a preference for specific epigenetic markers and also binds DNA. Interacts with KDM1B and promotes its histone demethylase activity by facilitating the capture of H3 tails, they form a multifunctional enzyme complex that modifies transcribed chromatin and facilitates Pol II transcription through nucleosomes. Stimulates the acetylation of 'Lys-56' of nucleosomal histone H3 (H3K56ac) by EP300. With GATA4, co-binds a defined set of heart development genes and coregulates their expression during cardiomyocyte differentiation. Regulates p38 MAP kinase activity by mediating stress activation of MAPK14/p38alpha and specifically regulating MAPK14 signaling. Indirectly promotes phosphorylation of MAPK14 and activation of ATF2. The phosphorylation of MAPK14 requires upstream activity of MAP2K4 and MAP2K6. The polypeptide is Cytokine-like nuclear factor N-PAC (Mus musculus (Mouse)).